A 219-amino-acid polypeptide reads, in one-letter code: MOB kinase activator-like 1 (219 aa).

The Zn(2+) site is built by Cys-79, Cys-84, His-161, and His-166.

This sequence belongs to the MOB1/phocein family. Interacts with and activates trc and wts. Post-translationally, phosphorylated by wts/mats kinase complex. Activated by phosphorylation by Hippo (Hpo) kinase which increases its affinity and its ability to activate Warts (Wts) kinase. As to expression, ubiquitously expressed at low levels in developing tissues (at protein level).

The protein localises to the cytoplasm. The protein resides in the cytoskeleton. It is found in the microtubule organizing center. Its subcellular location is the centrosome. It localises to the nucleus. The protein localises to the cytosol. The protein resides in the cell membrane. Functionally, coactivator of Warts (Wts) kinase in the Hippo/SWH (Sav/Wts/Hpo)signaling pathway, a signaling pathway that plays a pivotal role in organ size control and tumor suppression by restricting proliferation and promoting apoptosis. The core of this pathway is composed of a kinase cascade wherein Hippo (Hpo), in complex with its regulatory protein Salvador (Sav), phosphorylates and activates Warts (Wts) in complex with its regulatory protein Mats, which in turn phosphorylates and inactivates the Yorkie (Yki)oncoprotein. The Hippo/SWH signaling pathway inhibits the activity of the transcriptional complex formed by Scalloped (sd) and Yki and the target genes of this pathway include cyclin-E (cycE), diap1 and bantam. Mats is essential for early development and is required for proper chromosomal segregation in developing embryos. The chain is MOB kinase activator-like 1 from Drosophila melanogaster (Fruit fly).